The following is a 437-amino-acid chain: Pyrophosphate--fructose 6-phosphate 1-phosphotransferase (437 aa).

Glycine 27 is a diphosphate binding site. Aspartate 122 serves as a coordination point for Mg(2+). Substrate contacts are provided by residues 147-149 (TID), 193-195 (MGR), glutamate 261, and 323-326 (YELR). Catalysis depends on aspartate 149, which acts as the Proton acceptor.

The protein belongs to the phosphofructokinase type A (PFKA) family. PPi-dependent PFK group II subfamily. Clade 'Short' sub-subfamily. As to quaternary structure, homotetramer. Mg(2+) is required as a cofactor. It depends on Mn(2+) as a cofactor.

It is found in the cytoplasm. It carries out the reaction beta-D-fructose 6-phosphate + diphosphate = beta-D-fructose 1,6-bisphosphate + phosphate + H(+). It functions in the pathway carbohydrate degradation; glycolysis; D-glyceraldehyde 3-phosphate and glycerone phosphate from D-glucose: step 3/4. With respect to regulation, activated by AMP. Probably promotes oligomerization of the enzyme. In terms of biological role, catalyzes the phosphorylation of D-fructose 6-phosphate, the first committing step of glycolysis. Uses inorganic phosphate (PPi) as phosphoryl donor instead of ATP like common ATP-dependent phosphofructokinases (ATP-PFKs), which renders the reaction reversible, and can thus function both in glycolysis and gluconeogenesis. Consistently, PPi-PFK can replace the enzymes of both the forward (ATP-PFK) and reverse (fructose-bisphosphatase (FBPase)) reactions. The protein is Pyrophosphate--fructose 6-phosphate 1-phosphotransferase of Naegleria fowleri (Brain eating amoeba).